The sequence spans 297 residues: Protein MIZU-KUSSEI 1 (297 aa).

Expressed in root meristematic region, cortical cells, lateral root cap cells, columella cells of the root cap, mature region of the roots and leaf hydathodes.

It localises to the endoplasmic reticulum membrane. Functionally, plays a role in lateral root development by maintaining auxin levels. This function requires GNOM (GN/MIZ2) activity. Negatively regulates cytokinin sensitivity on root development. Positively regulates hydrotropism in roots. The protein is Protein MIZU-KUSSEI 1 (MIZ1) of Arabidopsis thaliana (Mouse-ear cress).